A 68-amino-acid polypeptide reads, in one-letter code: Conotoxin Lt5.2 (68 aa).

Residues 1–19 (MLCLPVFIILLLLASPAAP) form the signal peptide. Residues 20–54 (KSLETRIQNDLIRAGLTDADLKTEKGFLSGLLNVA) constitute a propeptide that is removed on maturation.

It belongs to the conotoxin T superfamily. In terms of processing, contains 2 disulfide bonds that can be either 'C1-C3, C2-C4' or 'C1-C4, C2-C3', since these disulfide connectivities have been observed for conotoxins with cysteine framework V (for examples, see AC P0DQQ7 and AC P81755). In terms of tissue distribution, expressed by the venom duct.

It localises to the secreted. The sequence is that of Conotoxin Lt5.2 from Conus litteratus (Lettered cone).